We begin with the raw amino-acid sequence, 93 residues long: Large ribosomal subunit protein uL23 (93 aa).

The protein belongs to the universal ribosomal protein uL23 family. As to quaternary structure, part of the 50S ribosomal subunit. Contacts protein L29, and trigger factor when it is bound to the ribosome.

Functionally, one of the early assembly proteins it binds 23S rRNA. One of the proteins that surrounds the polypeptide exit tunnel on the outside of the ribosome. Forms the main docking site for trigger factor binding to the ribosome. This is Large ribosomal subunit protein uL23 from Campylobacter curvus (strain 525.92).